Here is a 540-residue protein sequence, read N- to C-terminus: Keratin, type II cytoskeletal 73 (540 aa).

Residues 1-131 (MSRQFTYKSG…DPEIQKVRAQ (131 aa)) form a head region. A coil 1A region spans residues 132-167 (EREQIKVLNNKFASFIDKVRFLEQQNQVLETKWELL). One can recognise an IF rod domain in the interval 132–445 (EREQIKVLNN…KLLEGEECRM (314 aa)). Residues 168–186 (QQLDLNNCKNNLEPILEGY) form a linker 1 region. Residues 187 to 278 (ISNLRKQLET…CLYEGETAQI (92 aa)) form a coil 1B region. Residues 279–302 (QSHISDTSIILSMDNNRNLDLDSI) are linker 12. The coil 2 stretch occupies residues 303–441 (IAEVRAQYEE…ATYRKLLEGE (139 aa)). A tail region spans residues 442 to 540 (ECRMSGEYTN…LSSPTKKTMR (99 aa)). Positions 502-540 (SGNCSPRGEARTRLGSASEFRDSQGKTLALSSPTKKTMR) are disordered. Over residues 526–540 (GKTLALSSPTKKTMR) the composition is skewed to polar residues.

Belongs to the intermediate filament family. In terms of assembly, heterotetramer of two type I and two type II keratins. Highly expressed in hair follicles from scalp. In hair, it is specifically present in the inner root sheath (IRS) of the hair follicle. Present in the IRS cuticle, but not in Henle or Huxley layers of the IRS. In the IRS cuticle, it is expressed between the lowermost bulb region of the cuticle and the region where Henle cells undergo abrupt terminal differentiation. Detected up to the uppermost cortex region where cuticle cells terminally differentiate (at protein level).

In terms of biological role, has a role in hair formation. Specific component of keratin intermediate filaments in the inner root sheath (IRS) of the hair follicle. This is Keratin, type II cytoskeletal 73 (KRT73) from Homo sapiens (Human).